Consider the following 40-residue polypeptide: Meleagrin (40 aa).

At glutamine 1 the chain carries Pyrrolidone carboxylic acid. Cystine bridges form between cysteine 6–cysteine 33, cysteine 12–cysteine 28, and cysteine 16–cysteine 32.

This sequence belongs to the transferrin family.

The polypeptide is Meleagrin (Meleagris gallopavo (Wild turkey)).